Consider the following 27-residue polypeptide: GYEDEDEDRPFYALGLGKRPRTYSFGL.

A Leucine amide modification is found at L27.

The protein belongs to the allatostatin family.

It is found in the secreted. May act as a neurotransmitter or neuromodulator. The chain is Carcinustatin-20 from Carcinus maenas (Common shore crab).